Consider the following 466-residue polypeptide: Histidinol dehydrogenase, chloroplastic (466 aa).

The N-terminal 30 residues, 1–30 (MSLNLSRLSLLSSPRISISTHAPRKGYVCC), are a transit peptide targeting the chloroplast. NAD(+) is bound by residues Tyr155, Gln217, and Asn240. Ser266, Gln288, and His291 together coordinate substrate. 2 residues coordinate Zn(2+): Gln288 and His291. Residues Glu356 and His357 each act as proton acceptor in the active site. Substrate is bound by residues His357, Asp390, Glu444, and His449. Asp390 contributes to the Zn(2+) binding site. His449 lines the Zn(2+) pocket.

Belongs to the histidinol dehydrogenase family. The cofactor is Zn(2+).

It localises to the plastid. The protein localises to the chloroplast. The enzyme catalyses L-histidinol + 2 NAD(+) + H2O = L-histidine + 2 NADH + 3 H(+). It functions in the pathway amino-acid biosynthesis; L-histidine biosynthesis; L-histidine from 5-phospho-alpha-D-ribose 1-diphosphate: step 9/9. In terms of biological role, catalyzes the sequential NAD-dependent oxidations of L-histidinol to L-histidinaldehyde and then to L-histidine. In Arabidopsis thaliana (Mouse-ear cress), this protein is Histidinol dehydrogenase, chloroplastic (HISN8).